We begin with the raw amino-acid sequence, 478 residues long: Membrane-bound lytic murein transglycosylase F (478 aa).

Positions 1-22 are cleaved as a signal peptide; the sequence is MTRFLFAIILGLLLTACQQETV. A non-LT domain region spans residues 23-257; the sequence is EETEFVPHKL…HLNEKYFGHV (235 aa). Residues 258 to 478 are LT domain; sequence KRFDYIDTRA…PGTLSPDKPK (221 aa). Residue Glu302 is part of the active site. Positions 447-478 are disordered; the sequence is KQQNSEEVAPSDLTAEETPVPAPGTLSPDKPK.

It in the N-terminal section; belongs to the bacterial solute-binding protein 3 family. This sequence in the C-terminal section; belongs to the transglycosylase Slt family.

It is found in the cell outer membrane. It catalyses the reaction Exolytic cleavage of the (1-&gt;4)-beta-glycosidic linkage between N-acetylmuramic acid (MurNAc) and N-acetylglucosamine (GlcNAc) residues in peptidoglycan, from either the reducing or the non-reducing ends of the peptidoglycan chains, with concomitant formation of a 1,6-anhydrobond in the MurNAc residue.. Functionally, murein-degrading enzyme that degrades murein glycan strands and insoluble, high-molecular weight murein sacculi, with the concomitant formation of a 1,6-anhydromuramoyl product. Lytic transglycosylases (LTs) play an integral role in the metabolism of the peptidoglycan (PG) sacculus. Their lytic action creates space within the PG sacculus to allow for its expansion as well as for the insertion of various structures such as secretion systems and flagella. The protein is Membrane-bound lytic murein transglycosylase F of Shewanella oneidensis (strain ATCC 700550 / JCM 31522 / CIP 106686 / LMG 19005 / NCIMB 14063 / MR-1).